The chain runs to 287 residues: 4-diphosphocytidyl-2-C-methyl-D-erythritol kinase (287 aa).

Lys-14 is an active-site residue. Residue 98-108 (PPGAGLGGGSS) coordinates ATP. Asp-140 is an active-site residue.

The protein belongs to the GHMP kinase family. IspE subfamily.

The catalysed reaction is 4-CDP-2-C-methyl-D-erythritol + ATP = 4-CDP-2-C-methyl-D-erythritol 2-phosphate + ADP + H(+). It participates in isoprenoid biosynthesis; isopentenyl diphosphate biosynthesis via DXP pathway; isopentenyl diphosphate from 1-deoxy-D-xylulose 5-phosphate: step 3/6. Its function is as follows. Catalyzes the phosphorylation of the position 2 hydroxy group of 4-diphosphocytidyl-2C-methyl-D-erythritol. The protein is 4-diphosphocytidyl-2-C-methyl-D-erythritol kinase of Methylacidiphilum infernorum (isolate V4) (Methylokorus infernorum (strain V4)).